We begin with the raw amino-acid sequence, 349 residues long: Isopentenyl-diphosphate delta-isomerase (349 aa).

9–10 (RK) contacts substrate. Residues 65–67 (AMT), serine 95, and asparagine 124 contribute to the FMN site. 95-97 (STH) provides a ligand contact to substrate. Residue glutamine 154 participates in substrate binding. Mg(2+) is bound at residue glutamate 155. FMN contacts are provided by residues lysine 186, serine 211, threonine 216, 262 to 264 (GLR), and 283 to 284 (SR).

It belongs to the IPP isomerase type 2 family. As to quaternary structure, homooctamer. Dimer of tetramers. Requires FMN as cofactor. It depends on NADPH as a cofactor. The cofactor is Mg(2+).

Its subcellular location is the cytoplasm. It carries out the reaction isopentenyl diphosphate = dimethylallyl diphosphate. In terms of biological role, involved in the biosynthesis of isoprenoids. Catalyzes the 1,3-allylic rearrangement of the homoallylic substrate isopentenyl (IPP) to its allylic isomer, dimethylallyl diphosphate (DMAPP). The polypeptide is Isopentenyl-diphosphate delta-isomerase (Staphylococcus aureus).